The sequence spans 381 residues: Opsin Rh2 (381 aa).

Residues 1 to 56 (MERSHLPETPFDLAHSGPRFQAQSSGNGSVLDNVLPDMAHLVNPYWSRFAPMDPMM) are Extracellular-facing. Asparagine 27 is a glycosylation site (N-linked (GlcNAc...) asparagine). A helical membrane pass occupies residues 57–81 (SKILGLFTLAIMIISCCGNGVVVYI). Topologically, residues 82–93 (FGGTKSLRTPAN) are cytoplasmic. Residues 94–119 (LLVLNLAFSDFCMMASQSPVMIINFY) form a helical membrane-spanning segment. Topologically, residues 120–133 (YETWVLGPLWCDIY) are extracellular. A disulfide bridge connects residues cysteine 130 and cysteine 207. Residues 134 to 153 (AGCGSLFGCVSIWSMCMIAF) form a helical membrane-spanning segment. Residues 154–172 (DRYNVIVKGINGTPMTIKT) lie on the Cytoplasmic side of the membrane. Residues 173 to 196 (SIMKILFIWMMAVFWTVMPLIGWS) form a helical membrane-spanning segment. Topologically, residues 197–220 (AYVPEGNLTACSIDYMTRMWNPRS) are extracellular. Residues 221 to 248 (YLITYSLFVYYTPLFLICYSYWFIIAAV) traverse the membrane as a helical segment. Over 249–283 (AAHEKAMREQAKKMNVKSLRSSEDCDKSAEGKLAK) the chain is Cytoplasmic. The helical transmembrane segment at 284-307 (VALTTISLWFMAWTPYLVICYFGL) threads the bilayer. At 308 to 314 (FKIDGLT) the chain is on the extracellular side. Residues 315–339 (PLTTIWGATFAKTSAVYNPIVYGIS) form a helical membrane-spanning segment. Lysine 326 is subject to N6-(retinylidene)lysine. The Cytoplasmic segment spans residues 340–381 (HPKYRIVLKEKCPMCVFGNTDEPKPDAPASDTETTSEADSKA). Residues 359 to 381 (TDEPKPDAPASDTETTSEADSKA) are disordered. Residues 370–381 (DTETTSEADSKA) show a composition bias toward polar residues.

Belongs to the G-protein coupled receptor 1 family. Opsin subfamily. Post-translationally, phosphorylated on some or all of the serine and threonine residues present in the C-terminal region. As to expression, predominant opsin expressed in the dorsal ocelli.

The protein resides in the membrane. Functionally, visual pigments are the light-absorbing molecules that mediate vision. They consist of an apoprotein, opsin, covalently linked to cis-retinal. This chain is Opsin Rh2 (Rh2), found in Drosophila melanogaster (Fruit fly).